Here is a 334-residue protein sequence, read N- to C-terminus: Holliday junction branch migration complex subunit RuvB (334 aa).

The tract at residues M1–Y179 is large ATPase domain (RuvB-L). Residues L18, R19, G60, K63, T64, S65, E126 to F128, R169, Y179, and R216 contribute to the ATP site. T64 is a binding site for Mg(2+). The tract at residues T180 to L250 is small ATPAse domain (RuvB-S). The segment at N253 to E334 is head domain (RuvB-H). Residues R308 and R313 each contribute to the DNA site.

This sequence belongs to the RuvB family. As to quaternary structure, homohexamer. Forms an RuvA(8)-RuvB(12)-Holliday junction (HJ) complex. HJ DNA is sandwiched between 2 RuvA tetramers; dsDNA enters through RuvA and exits via RuvB. An RuvB hexamer assembles on each DNA strand where it exits the tetramer. Each RuvB hexamer is contacted by two RuvA subunits (via domain III) on 2 adjacent RuvB subunits; this complex drives branch migration. In the full resolvosome a probable DNA-RuvA(4)-RuvB(12)-RuvC(2) complex forms which resolves the HJ.

The protein localises to the cytoplasm. It carries out the reaction ATP + H2O = ADP + phosphate + H(+). The RuvA-RuvB-RuvC complex processes Holliday junction (HJ) DNA during genetic recombination and DNA repair, while the RuvA-RuvB complex plays an important role in the rescue of blocked DNA replication forks via replication fork reversal (RFR). RuvA specifically binds to HJ cruciform DNA, conferring on it an open structure. The RuvB hexamer acts as an ATP-dependent pump, pulling dsDNA into and through the RuvAB complex. RuvB forms 2 homohexamers on either side of HJ DNA bound by 1 or 2 RuvA tetramers; 4 subunits per hexamer contact DNA at a time. Coordinated motions by a converter formed by DNA-disengaged RuvB subunits stimulates ATP hydrolysis and nucleotide exchange. Immobilization of the converter enables RuvB to convert the ATP-contained energy into a lever motion, pulling 2 nucleotides of DNA out of the RuvA tetramer per ATP hydrolyzed, thus driving DNA branch migration. The RuvB motors rotate together with the DNA substrate, which together with the progressing nucleotide cycle form the mechanistic basis for DNA recombination by continuous HJ branch migration. Branch migration allows RuvC to scan DNA until it finds its consensus sequence, where it cleaves and resolves cruciform DNA. The polypeptide is Holliday junction branch migration complex subunit RuvB (Chlamydia trachomatis serovar L2 (strain ATCC VR-902B / DSM 19102 / 434/Bu)).